A 446-amino-acid polypeptide reads, in one-letter code: Exodeoxyribonuclease 7 large subunit (446 aa).

It belongs to the XseA family. As to quaternary structure, heterooligomer composed of large and small subunits.

The protein localises to the cytoplasm. The catalysed reaction is Exonucleolytic cleavage in either 5'- to 3'- or 3'- to 5'-direction to yield nucleoside 5'-phosphates.. In terms of biological role, bidirectionally degrades single-stranded DNA into large acid-insoluble oligonucleotides, which are then degraded further into small acid-soluble oligonucleotides. This chain is Exodeoxyribonuclease 7 large subunit, found in Streptococcus agalactiae serotype Ia (strain ATCC 27591 / A909 / CDC SS700).